A 384-amino-acid chain; its full sequence is Magnesium transporter MRS2-I (384 aa).

Transmembrane regions (helical) follow at residues 319–339 and 356–376; these read LFLS…GIFG and WVVL…VAYA. Positions 339-341 match the Required for magnesium transport activity motif; sequence GMN.

It belongs to the CorA metal ion transporter (MIT) (TC 1.A.35.5) family.

Its subcellular location is the membrane. Magnesium transporter that may mediate the influx of magnesium. This Oryza sativa subsp. japonica (Rice) protein is Magnesium transporter MRS2-I (MRS2-I).